A 591-amino-acid chain; its full sequence is Aspartate--tRNA(Asp/Asn) ligase (591 aa).

Residue Glu175 coordinates L-aspartate. The interval 199 to 202 is aspartate; sequence QQYK. L-aspartate contacts are provided by Arg221 and His450. ATP is bound at residue 221 to 223; it reads RDE. ATP is bound at residue Glu484. Residue Arg491 coordinates L-aspartate. Residue 536 to 539 participates in ATP binding; sequence GVDR.

It belongs to the class-II aminoacyl-tRNA synthetase family. Type 1 subfamily. As to quaternary structure, homodimer.

It is found in the cytoplasm. The enzyme catalyses tRNA(Asx) + L-aspartate + ATP = L-aspartyl-tRNA(Asx) + AMP + diphosphate. Its function is as follows. Aspartyl-tRNA synthetase with relaxed tRNA specificity since it is able to aspartylate not only its cognate tRNA(Asp) but also tRNA(Asn). Reaction proceeds in two steps: L-aspartate is first activated by ATP to form Asp-AMP and then transferred to the acceptor end of tRNA(Asp/Asn). The protein is Aspartate--tRNA(Asp/Asn) ligase of Rhodopseudomonas palustris (strain ATCC BAA-98 / CGA009).